A 360-amino-acid polypeptide reads, in one-letter code: MTDLQSLESDLLAQVQGAPDEAALEGVRVAALGKKGAVSELLKTLGAMSPEERKERGPLINGLRDRVHGAILARRETLAEAALEARLAAERIDVTLPVREGPETRGRVHPITQVIDEITAIFGDMGFSIAEGPDIETDELNFTALNFPEGHPAREMHDTFFLPPGRDGTRKLLRTHTSPVQVRTMRAQEPPIRVICPGRTYRHDSDQTHTPMFHQVEGLVIDRSANLAHLKWILEEFCKAFFEVESVKMRFRPSFFPFTEPSAEVDIQCSRQGGEIRFGEGNDWLEILGCGMVHPNVLRHCGLDPDQVQGFAWGLGIDRIAMLKYGMPDLRPFFEADMRWLDHYGFRPLDIPSLVGGLTG.

Glutamate 260 lines the Mg(2+) pocket.

The protein belongs to the class-II aminoacyl-tRNA synthetase family. Phe-tRNA synthetase alpha subunit type 1 subfamily. As to quaternary structure, tetramer of two alpha and two beta subunits. Requires Mg(2+) as cofactor.

Its subcellular location is the cytoplasm. The catalysed reaction is tRNA(Phe) + L-phenylalanine + ATP = L-phenylalanyl-tRNA(Phe) + AMP + diphosphate + H(+). This is Phenylalanine--tRNA ligase alpha subunit from Methylobacterium nodulans (strain LMG 21967 / CNCM I-2342 / ORS 2060).